Consider the following 571-residue polypeptide: Proline--tRNA ligase (571 aa).

It belongs to the class-II aminoacyl-tRNA synthetase family. ProS type 1 subfamily. Homodimer.

The protein resides in the cytoplasm. The enzyme catalyses tRNA(Pro) + L-proline + ATP = L-prolyl-tRNA(Pro) + AMP + diphosphate. In terms of biological role, catalyzes the attachment of proline to tRNA(Pro) in a two-step reaction: proline is first activated by ATP to form Pro-AMP and then transferred to the acceptor end of tRNA(Pro). As ProRS can inadvertently accommodate and process non-cognate amino acids such as alanine and cysteine, to avoid such errors it has two additional distinct editing activities against alanine. One activity is designated as 'pretransfer' editing and involves the tRNA(Pro)-independent hydrolysis of activated Ala-AMP. The other activity is designated 'posttransfer' editing and involves deacylation of mischarged Ala-tRNA(Pro). The misacylated Cys-tRNA(Pro) is not edited by ProRS. This is Proline--tRNA ligase from Pseudomonas aeruginosa (strain UCBPP-PA14).